A 298-amino-acid polypeptide reads, in one-letter code: Acetylglutamate kinase (298 aa).

Residues 69-70 (GG), Arg-91, and Asn-191 contribute to the substrate site.

It belongs to the acetylglutamate kinase family. ArgB subfamily.

It localises to the cytoplasm. It catalyses the reaction N-acetyl-L-glutamate + ATP = N-acetyl-L-glutamyl 5-phosphate + ADP. Its pathway is amino-acid biosynthesis; L-arginine biosynthesis; N(2)-acetyl-L-ornithine from L-glutamate: step 2/4. Catalyzes the ATP-dependent phosphorylation of N-acetyl-L-glutamate. This is Acetylglutamate kinase from Neisseria meningitidis serogroup A / serotype 4A (strain DSM 15465 / Z2491).